We begin with the raw amino-acid sequence, 374 residues long: Autophagy-related protein 18e (374 aa).

WD repeat units follow at residues 28 to 66, 72 to 117, 202 to 242, and 247 to 286; these read KSDLKVLSVAWNQVCSGFIVGTNHGFNVYSCKPMIKKSI, ESGF…CLSE, AHDS…LLQE, and VERAEIYNVAISSNLKWVAASSEKGTLHVFRLRPDILSFD.

Belongs to the WD repeat PROPPIN family. Component of the PI(3,5)P2 regulatory complex at least composed of ATG18, SAC/FIG4, FAB1 and VAC14.

It is found in the preautophagosomal structure membrane. The protein resides in the vacuole membrane. In terms of biological role, the PI(3,5)P2 regulatory complex regulates both the synthesis and turnover of phosphatidylinositol 3,5-bisphosphate (PtdIns(3,5)P2). Required for autophagy. The chain is Autophagy-related protein 18e (ATG18E) from Arabidopsis thaliana (Mouse-ear cress).